A 180-amino-acid chain; its full sequence is Large ribosomal subunit protein mL41 (180 aa).

Residues 1–21 (MKLVLVSTRGVRSLNSTNFPA) constitute a mitochondrion transit peptide.

It belongs to the mitochondrion-specific ribosomal protein mL41 family. Component of the mitochondrial ribosome large subunit (39S) which comprises a 16S rRNA and about 50 distinct proteins.

It localises to the mitochondrion. The sequence is that of Large ribosomal subunit protein mL41 (mrpl-41) from Caenorhabditis elegans.